The chain runs to 337 residues: tRNA N6-adenosine threonylcarbamoyltransferase (337 aa).

2 residues coordinate Fe cation: H111 and H115. Substrate is bound by residues 134-138 (LVSGG), D167, G180, and N272. Fe cation is bound at residue D300.

This sequence belongs to the KAE1 / TsaD family. Requires Fe(2+) as cofactor.

The protein resides in the cytoplasm. The catalysed reaction is L-threonylcarbamoyladenylate + adenosine(37) in tRNA = N(6)-L-threonylcarbamoyladenosine(37) in tRNA + AMP + H(+). Its function is as follows. Required for the formation of a threonylcarbamoyl group on adenosine at position 37 (t(6)A37) in tRNAs that read codons beginning with adenine. Is involved in the transfer of the threonylcarbamoyl moiety of threonylcarbamoyl-AMP (TC-AMP) to the N6 group of A37, together with TsaE and TsaB. TsaD likely plays a direct catalytic role in this reaction. In Shewanella loihica (strain ATCC BAA-1088 / PV-4), this protein is tRNA N6-adenosine threonylcarbamoyltransferase.